Here is a 175-residue protein sequence, read N- to C-terminus: Ribosome maturation factor RimM (175 aa).

Positions 99–172 (ADEYHVSDLI…RLEVDAPPGL (74 aa)) constitute a PRC barrel domain.

This sequence belongs to the RimM family. Binds ribosomal protein uS19.

The protein localises to the cytoplasm. Functionally, an accessory protein needed during the final step in the assembly of 30S ribosomal subunit, possibly for assembly of the head region. Essential for efficient processing of 16S rRNA. May be needed both before and after RbfA during the maturation of 16S rRNA. It has affinity for free ribosomal 30S subunits but not for 70S ribosomes. The protein is Ribosome maturation factor RimM of Picosynechococcus sp. (strain ATCC 27264 / PCC 7002 / PR-6) (Agmenellum quadruplicatum).